Consider the following 390-residue polypeptide: tRNA (guanine(26)-N(2))-dimethyltransferase (390 aa).

The Trm1 methyltransferase domain maps to 4 to 378; it reads HIIEEGLVKI…MPLDELKQLI (375 aa). Residues arginine 37, arginine 67, aspartate 85, aspartate 112, and alanine 113 each contribute to the S-adenosyl-L-methionine site. The Zn(2+) site is built by cysteine 245, cysteine 248, cysteine 265, and cysteine 268.

Belongs to the class I-like SAM-binding methyltransferase superfamily. Trm1 family.

The catalysed reaction is guanosine(26) in tRNA + 2 S-adenosyl-L-methionine = N(2)-dimethylguanosine(26) in tRNA + 2 S-adenosyl-L-homocysteine + 2 H(+). Functionally, dimethylates a single guanine residue at position 26 of a number of tRNAs using S-adenosyl-L-methionine as donor of the methyl groups. The polypeptide is tRNA (guanine(26)-N(2))-dimethyltransferase (Methanosphaera stadtmanae (strain ATCC 43021 / DSM 3091 / JCM 11832 / MCB-3)).